The chain runs to 485 residues: Predicted GPI-anchored protein 27 (485 aa).

Positions 1-20 (MHFTSSLLATLIWFTLPVQS) are cleaved as a signal peptide. N-linked (GlcNAc...) asparagine glycosylation is found at Asn-30, Asn-86, Asn-96, and Asn-444. Gly-467 carries GPI-anchor amidated glycine lipidation. Positions 468 to 485 (LVLVSSGVLLGTCLLFIL) are cleaved as a propeptide — removed in mature form.

It is found in the cell membrane. The protein is Predicted GPI-anchored protein 27 (PGA27) of Candida albicans (strain SC5314 / ATCC MYA-2876) (Yeast).